We begin with the raw amino-acid sequence, 267 residues long: Ribosomal RNA small subunit methyltransferase A (267 aa).

6 residues coordinate S-adenosyl-L-methionine: H13, L15, G40, E61, D85, and N105.

It belongs to the class I-like SAM-binding methyltransferase superfamily. rRNA adenine N(6)-methyltransferase family. RsmA subfamily.

The protein localises to the cytoplasm. It catalyses the reaction adenosine(1518)/adenosine(1519) in 16S rRNA + 4 S-adenosyl-L-methionine = N(6)-dimethyladenosine(1518)/N(6)-dimethyladenosine(1519) in 16S rRNA + 4 S-adenosyl-L-homocysteine + 4 H(+). Functionally, specifically dimethylates two adjacent adenosines (A1518 and A1519) in the loop of a conserved hairpin near the 3'-end of 16S rRNA in the 30S particle. May play a critical role in biogenesis of 30S subunits. This is Ribosomal RNA small subunit methyltransferase A from Bacteroides thetaiotaomicron (strain ATCC 29148 / DSM 2079 / JCM 5827 / CCUG 10774 / NCTC 10582 / VPI-5482 / E50).